Consider the following 401-residue polypeptide: Exodeoxyribonuclease 7 large subunit (401 aa).

The protein belongs to the XseA family. Heterooligomer composed of large and small subunits.

It localises to the cytoplasm. The enzyme catalyses Exonucleolytic cleavage in either 5'- to 3'- or 3'- to 5'-direction to yield nucleoside 5'-phosphates.. Functionally, bidirectionally degrades single-stranded DNA into large acid-insoluble oligonucleotides, which are then degraded further into small acid-soluble oligonucleotides. This Clostridium botulinum (strain Loch Maree / Type A3) protein is Exodeoxyribonuclease 7 large subunit.